Consider the following 160-residue polypeptide: CST complex subunit STN1 (160 aa).

A DNA-binding region (OB) is located at residues 41 to 133 (VEIVGTIVSR…QITANVAVAE (93 aa)).

Belongs to the STN1 family. Component of the CST complex, composed of CTC1, TEN1 and STN1. Interacts with CTC1. Interacts with TEN1. Interacts with POT1A. In vitro interaction with TEN1 and POT1A is mutually exclusive, indicating that POT1A and TEN1 may compete for the same binding site. As to expression, widely expressed.

It is found in the nucleus. It localises to the chromosome. The protein localises to the telomere. Component of the CST complex, a complex that binds to single-stranded DNA and is required to protect telomeres from DNA degradation. The CST complex binds single-stranded DNA with high affinity in a sequence-independent manner, while isolated subunits bind DNA with low affinity by themselves. Associates with enzymatically active telomerase. Plays a genomewide role in DNA replication and facilitates re-replication at non-telomeric loci. This is CST complex subunit STN1 from Arabidopsis thaliana (Mouse-ear cress).